Here is a 110-residue protein sequence, read N- to C-terminus: Small ribosomal subunit protein bS16 (110 aa).

Residues 79-110 are disordered; it reads AAGVKKREARNNPQKAVPRKERKAQAEAAAKG.

The protein belongs to the bacterial ribosomal protein bS16 family.

The chain is Small ribosomal subunit protein bS16 from Bradyrhizobium diazoefficiens (strain JCM 10833 / BCRC 13528 / IAM 13628 / NBRC 14792 / USDA 110).